A 138-amino-acid polypeptide reads, in one-letter code: ATP synthase epsilon chain (138 aa).

It belongs to the ATPase epsilon chain family. As to quaternary structure, F-type ATPases have 2 components, CF(1) - the catalytic core - and CF(0) - the membrane proton channel. CF(1) has five subunits: alpha(3), beta(3), gamma(1), delta(1), epsilon(1). CF(0) has three main subunits: a, b and c.

It localises to the cell inner membrane. In terms of biological role, produces ATP from ADP in the presence of a proton gradient across the membrane. The protein is ATP synthase epsilon chain of Geobacter sulfurreducens (strain ATCC 51573 / DSM 12127 / PCA).